The primary structure comprises 1933 residues: Protein TIC 214 (1933 aa).

Helical transmembrane passes span 18 to 38 (IVNS…FSIG), 60 to 80 (ATTG…YAPL), 87 to 107 (PHTI…FYTD), 128 to 148 (FSIQ…HFIL), 176 to 196 (VGWL…LVWI), and 230 to 250 (IFYI…PAPL). Disordered regions lie at residues 266–291 (AKGK…VGVG), 473–514 (KTKS…SRDN), 808–832 (THRE…AEDP), and 1066–1121 (ESFT…SSNA). A compositionally biased stretch (acidic residues) spans 278 to 289 (EEGDVEKEDEVG). The segment covering 476-487 (SLSPEKTSGDNL) has biased composition (polar residues). Composition is skewed to basic and acidic residues over residues 488–514 (ETSR…SRDN) and 819–832 (DEKN…AEDP). Over residues 1066 to 1078 (ESFTQISSPSSTN) the composition is skewed to polar residues. Basic residues predominate over residues 1105-1115 (KEKKKKKRSLK). A helical membrane pass occupies residues 1135 to 1155 (LPVYLKLFIQRIYTGIFFSII). Positions 1562–1642 (NADNEKNEKK…SAESTTKKVT (81 aa)) are disordered. Positions 1564 to 1642 (DNEKNEKKEA…SAESTTKKVT (79 aa)) are enriched in basic and acidic residues.

It belongs to the TIC214 family. In terms of assembly, part of the Tic complex.

Its subcellular location is the plastid. It localises to the chloroplast inner membrane. In terms of biological role, involved in protein precursor import into chloroplasts. May be part of an intermediate translocation complex acting as a protein-conducting channel at the inner envelope. In Jasminum nudiflorum (Winter jasmine), this protein is Protein TIC 214.